A 640-amino-acid polypeptide reads, in one-letter code: Phosphatidylinositol-binding clathrin assembly protein (640 aa).

N-acetylserine is present on serine 2. An ENTH domain is found at 14-145; that stretch reads QHSVTGSAVS…VSYRQVAFDF (132 aa). A phosphoserine mark is found at serine 16 and serine 20. Positions 221–294 are interaction with PIMREG; the sequence is KYFDMKKNQC…LEGKKIKDST (74 aa). Residue lysine 238 forms a Glycyl lysine isopeptide (Lys-Gly) (interchain with G-Cter in SUMO2) linkage. A phosphoserine mark is found at serine 303 and serine 315. Positions 543 to 568 are disordered; that stretch reads NGTTKNDVSCSQPGEKKLTGGSNWQP. Polar residues predominate over residues 544–554; that stretch reads GTTKNDVSCSQ.

It belongs to the PICALM/SNAP91 family. In terms of assembly, binds to clathrin; involves primarily the C-terminal sequences, but the full-length protein is required for full binding capacity. Binds phosphatidylinositol 4,5- bisphosphate. Interacts with PIMREG; this interaction may change the subcellular location into the nucleus. Interacts with AP2A1 (via its alpha-appendage domain). Interacts (via N-terminus) with VAMP2; VAMP3; VAMP7 and VAMP8 (Via N-terminus). Interacts with LC3/MAP1LC3A. Isoform 2 was found in most tissues examined. Isoform 1 has an overlapping expression pattern but is absent from lung, heart and pancreas. Both isoforms are widely expressed in the brain, higher levels are seen in hippocampus, dentate gyrus, medial habenula nucleus and cerebellar granule cells.

Its subcellular location is the cell membrane. The protein resides in the membrane. It localises to the clathrin-coated pit. It is found in the golgi apparatus. The protein localises to the cytoplasmic vesicle. Its subcellular location is the clathrin-coated vesicle. The protein resides in the nucleus. In terms of biological role, cytoplasmic adapter protein that plays a critical role in clathrin-mediated endocytosis which is important in processes such as internalization of cell receptors, synaptic transmission or removal of apoptotic cells. Recruits AP-2 and attaches clathrin triskelions to the cytoplasmic side of plasma membrane leading to clathrin-coated vesicles (CCVs) assembly. Furthermore, regulates clathrin-coated vesicle size and maturation by directly sensing and driving membrane curvature. In addition to binding to clathrin, mediates the endocytosis of small R-SNARES (Soluble NSF Attachment Protein REceptors) between plasma membranes and endosomes including VAMP2, VAMP3, VAMP4, VAMP7 or VAMP8. In turn, PICALM-dependent SNARE endocytosis is required for the formation and maturation of autophagic precursors. Modulates thereby autophagy and the turnover of autophagy substrates such as MAPT/TAU or amyloid precursor protein cleaved C-terminal fragment (APP-CTF). The protein is Phosphatidylinositol-binding clathrin assembly protein (Picalm) of Rattus norvegicus (Rat).